Here is a 307-residue protein sequence, read N- to C-terminus: MVSLTTSEVHPTMGVKTFSAGISACLADIITFPLDTAKVRLQIQGEGQTSSTIRYKGVLGTITTLAKTEGWPKLYSGLPAGIQRQISFASLRIGLYDTVQEYFSSGKETPPTLGNRISAGLMTGGVAVFIGQPTEVVKVRLQAQSHLHGIKPRYTGTYNAYRIIATTESFSTLWKGTTPNLMRNVIINRTELVTYDLMKGALVNNQILADDVPCHLLSALVAGFCTTFLASPADVVKTRFINSLPGQYPSVPSCAMTMLTKEGPTAFFKGFVPSFLRLASWNVIMFVCFEQLKKELMKSRQTMDCTT.

The Mitochondrial intermembrane segment spans residues 1-10; that stretch reads MVSLTTSEVH. Residues 11-32 traverse the membrane as a helical segment; that stretch reads PTMGVKTFSAGISACLADIITF. Solcar repeat units follow at residues 11-102, 111-201, and 210-295; these read PTMG…VQEY, PTLG…MKGA, and DDVP…LKKE. Residues 33–73 lie on the Mitochondrial matrix side of the membrane; it reads PLDTAKVRLQIQGEGQTSSTIRYKGVLGTITTLAKTEGWPK. A fatty acid 16:0-binding site is contributed by lysine 56. Residues 74–96 form a helical membrane-spanning segment; the sequence is LYSGLPAGIQRQISFASLRIGLY. Over 97–116 the chain is Mitochondrial intermembrane; the sequence is DTVQEYFSSGKETPPTLGNR. Residues 117-133 form a helical membrane-spanning segment; it reads ISAGLMTGGVAVFIGQP. The Mitochondrial matrix portion of the chain corresponds to 134 to 178; it reads TEVVKVRLQAQSHLHGIKPRYTGTYNAYRIIATTESFSTLWKGTT. Residues 179 to 195 traverse the membrane as a helical segment; the sequence is PNLMRNVIINRTELVTY. Over 196 to 212 the chain is Mitochondrial intermembrane; that stretch reads DLMKGALVNNQILADDV. A helical membrane pass occupies residues 213 to 232; that stretch reads PCHLLSALVAGFCTTFLASP. The Mitochondrial matrix segment spans residues 233 to 266; the sequence is ADVVKTRFINSLPGQYPSVPSCAMTMLTKEGPTA. Cysteine 254 is subject to Cysteine sulfenic acid (-SOH). The helical transmembrane segment at 267–289 threads the bilayer; the sequence is FFKGFVPSFLRLASWNVIMFVCF. Residue lysine 269 participates in fatty acid 16:0 binding. Topologically, residues 290–307 are mitochondrial intermembrane; the sequence is EQLKKELMKSRQTMDCTT.

This sequence belongs to the mitochondrial carrier (TC 2.A.29) family. As to quaternary structure, most probably functions as a monomer. Binds one purine nucleotide per monomer. However, has also been suggested to function as a homodimer or a homotetramer. Tightly associates with cardiolipin in the mitochondrion inner membrane; may stabilize and regulate its activity. May undergo sulfenylation upon cold exposure. May increase the sensitivity of UCP1 thermogenic function to the activation by noradrenaline probably through structural effects. In terms of processing, may undergo ubiquitin-mediated proteasomal degradation.

The protein localises to the mitochondrion inner membrane. The catalysed reaction is H(+)(in) = H(+)(out). With respect to regulation, has no constitutive proton transporter activity and has to be activated by long-chain fatty acids/LCFAs. Inhibited by purine nucleotides. Both purine nucleotides and LCFAs bind the cytosolic side of the transporter and directly compete to activate or inhibit it. Activated by noradrenaline and reactive oxygen species. Despite lacking canonical translational encoding for selenocysteine, a small pool of the protein has been observed to selectively incorporate selenocysteine at 'Cys-254'. Selenocysteine-modified protein is highly sensitive to redox modification and may constitute a pool of protein highly sensitive to activation by elevated levels of reactive oxygen species (ROS). Functionally, mitochondrial protein responsible for thermogenic respiration, a specialized capacity of brown adipose tissue and beige fat that participates in non-shivering adaptive thermogenesis to temperature and diet variations and more generally to the regulation of energy balance. Functions as a long-chain fatty acid/LCFA and proton symporter, simultaneously transporting one LCFA and one proton through the inner mitochondrial membrane. However, LCFAs remaining associated with the transporter via their hydrophobic tails, it results in an apparent transport of protons activated by LCFAs. Thereby, dissipates the mitochondrial proton gradient and converts the energy of substrate oxydation into heat instead of ATP. Regulates the production of reactive oxygen species/ROS by mitochondria. This is Mitochondrial brown fat uncoupling protein 1 from Dicrostonyx groenlandicus (Northern collared lemming).